The following is a 368-amino-acid chain: Spore germination protein B2 (368 aa).

A run of 10 helical transmembrane segments spans residues 10-30, 43-63, 82-102, 120-140, 145-165, 187-207, 217-237, 282-302, 308-328, and 338-358; these read FMQT…LTLP, LMIL…LPFL, FIGF…VCFQ, MAVV…GGVY, VYAY…MFSF, LFPK…LVPF, AVAL…LIVI, FACM…IFHL, AWLL…PKDL, and LGYA…LSWI.

The protein belongs to the amino acid-polyamine-organocation (APC) superfamily. Spore germination protein (SGP) (TC 2.A.3.9) family.

It localises to the cell membrane. Functionally, involved in the response to the germinative mixture of L-asparagine, glucose, fructose and potassium ions (AGFK). Could be an amino acid transporter. Cannot stimulate germination in the absence of gerD and gerK gene products (fructose and glucose receptors, respectively). This Bacillus subtilis (strain 168) protein is Spore germination protein B2 (gerBB).